The following is a 202-amino-acid chain: Probable septum site-determining protein MinC (202 aa).

Belongs to the MinC family. In terms of assembly, interacts with MinD and FtsZ.

Cell division inhibitor that blocks the formation of polar Z ring septums. Rapidly oscillates between the poles of the cell to destabilize FtsZ filaments that have formed before they mature into polar Z rings. Prevents FtsZ polymerization. The sequence is that of Probable septum site-determining protein MinC from Dictyoglomus turgidum (strain DSM 6724 / Z-1310).